Reading from the N-terminus, the 1074-residue chain is MSLRSEARVNTSTLQKIAADMSNLIENLDTRELHFEGEEVEYDASPGDPTAQEACIPFSSIYNTQGFKEPNIQIYLSGCPVKAQVLEVERFTSTSRMPSVNLYTIELTHGEFTWQVKRKFKHFQEFHRELLKYKAFIRIPIPTKRHTFRRQNVKEEPREMPSLPRSSENAIQEEQFFGRRKQLEDYLTKILKMPMYRNYHATTEFLDVSQLSFIHDLGPKGLEGMIMKRSGGHRIPGVNCCGHGRACYRWSKRWLIVKDSFLLYMKPDSGAIAFVLLVDKEFRIKVGKKETETKYGLRIDNLSRTLILKCNSYRHARWWGGAIEEFIQKHGTDFLKDHRFGSYAAVHENILAKWYVNAKGYFEDIANAMEGATEEIFITDWWLSPEIFLKRPVVEGNRWRLDCILKRKAQQGVRIFIMLYKEVELALGINSEYTKRTLMRLHPNIKVMRHPDHVSSSVYLWAHHEKLVIIDQSVAFVGGIDLAYGRWDDNEHRLTDVGSVKRVTSGQSLGSLTAASVESMESLSLKDKHQSHKNEPVLKSVNDTDMKLKGIGKSRKFSKFSLYRQLHRRNLHNSDSISSVDSASSYFNHYRSHQNLIHGIKPHLKLFRPSSESEQGLTRHSADTGSIRSVQTGVGELHGETRFWHGKDYCNFVFKDWVQLDKPFADFIDRYSTPRMPWHDIGSVVHGKAARDVARHFIQRWNFTKIMKPKYRSLSYPFLLPKSQATAHELRYQVPGAVHAKAQLLRSAADWSAGIKHHEESIHAAYTHVIENSKHYIYIENQFFISCADDKVVFNKVGNAIAQRILKAHREGQRYRVYIVIPLLPGFEGDISTGGGNALQAIMHFNYRTMCRGESSILEQLKPELGNKWINYISFCGLRTHAELEGNLVTELIYVHSKLLIADDNTVIIGSANINDRSMLGKRDSEMAVIVQDTETVPSVMDGKEYQAGRFAQGLRLECFRLVLGYLSDPSEDIQDPVSDKFFKEIWVSTAARNATIYDKVFRCLPNDEVHNLIQLRDFINKPILAKEDRLRAEEELRKIRGFLVQFPFYFLSEENLLPSVGTKEAIVPMEVWT.

Residues 81-212 form the PX domain; sequence VKAQVLEVER…TEFLDVSQLS (132 aa). The PH domain maps to 219-328; sequence PKGLEGMIMK…WGGAIEEFIQ (110 aa). 2 S-palmitoyl cysteine lipidation sites follow: cysteine 240 and cysteine 241. The PLD phosphodiesterase 1 domain occupies 459 to 486; that stretch reads YLWAHHEKLVIIDQSVAFVGGIDLAYGR. Residues 463–928 form a catalytic region; it reads HHEKLVIIDQ…MLGKRDSEMA (466 aa). Residues serine 499, serine 561, and serine 629 each carry the phosphoserine modification. The PLD phosphodiesterase 2 domain maps to 891 to 918; sequence ELIYVHSKLLIADDNTVIIGSANINDRS.

It belongs to the phospholipase D family. Interacts with PIP5K1B. Post-translationally, phosphorylated on serine and threonine residues. In terms of processing, it is uncertain whether palmitoylation is on Cys-240 and/or Cys-241. Palmitoylation is required prior to phosphorylation.

The protein resides in the cytoplasm. Its subcellular location is the perinuclear region. It localises to the endoplasmic reticulum membrane. The protein localises to the golgi apparatus membrane. It is found in the late endosome membrane. The catalysed reaction is a 1,2-diacyl-sn-glycero-3-phosphocholine + H2O = a 1,2-diacyl-sn-glycero-3-phosphate + choline + H(+). The enzyme catalyses ethanol + a 1,2-diacyl-sn-glycero-3-phosphocholine = 1,2-diacyl-sn-glycero-3-phosphoethanol + choline. It catalyses the reaction 1,2-dihexadecanoyl-sn-glycero-3-phosphocholine + H2O = 1,2-dihexadecanoyl-sn-glycero-3-phosphate + choline + H(+). With respect to regulation, stimulated by phosphatidylinositol 4,5-bisphosphate and phosphatidylinositol 3,4,5-trisphosphate, activated by the phosphokinase C-alpha, by the ADP-ribosylation factor-1 (ARF-1), and to a lesser extent by GTP-binding proteins: RHO A, RAC-1 and CDC42. Inhibited by oleate. Function as phospholipase selective for phosphatidylcholine. Implicated as a critical step in numerous cellular pathways, including signal transduction, membrane trafficking, and the regulation of mitosis. May be involved in the regulation of perinuclear intravesicular membrane traffic. This is Phospholipase D1 from Rattus norvegicus (Rat).